The chain runs to 189 residues: MSGACSSYVSAEQEVVRGFSCPLPGGEAAAVFCCGFRDHKYCCDDPHSFFPYEHNYMWWLSIGALVGLSTAAVVLLAFLITACVLCYLFISSKPQTKLDPGLSLQTTGSKEMSPDHHGLNTAIPMEVPGVSSPRQSSSSNTHLESNKKQTVSPTCLPQNQFMATVTASNIPGSPDEISVPTPGPHGPVP.

2 helical membrane passes run 48–68 (SFFPYEHNYMWWLSIGALVGL) and 70–90 (TAAVVLLAFLITACVLCYLFI). The segment at 98–189 (LDPGLSLQTT…PTPGPHGPVP (92 aa)) is disordered. Positions 140–171 (NTHLESNKKQTVSPTCLPQNQFMATVTASNIP) are enriched in polar residues.

It belongs to the shisa family.

The protein resides in the membrane. In Mus musculus (Mouse), this protein is Protein shisa-like-2A (Shisal2a).